The sequence spans 180 residues: Ribosome maturation factor RimM (180 aa).

Residues 104 to 177 form the PRC barrel domain; that stretch reads PEEFHDHQLV…RVVVDPPGGL (74 aa).

Belongs to the RimM family. In terms of assembly, binds ribosomal protein uS19.

The protein resides in the cytoplasm. An accessory protein needed during the final step in the assembly of 30S ribosomal subunit, possibly for assembly of the head region. Essential for efficient processing of 16S rRNA. May be needed both before and after RbfA during the maturation of 16S rRNA. It has affinity for free ribosomal 30S subunits but not for 70S ribosomes. In Salinispora tropica (strain ATCC BAA-916 / DSM 44818 / JCM 13857 / NBRC 105044 / CNB-440), this protein is Ribosome maturation factor RimM.